The chain runs to 133 residues: Hemiptericin (133 aa).

Its function is as follows. Antibacterial peptide. Affects Gram-negative bacteria. The chain is Hemiptericin from Pyrrhocoris apterus (Sap sucking bug).